Consider the following 297-residue polypeptide: HTH-type transcriptional regulator ArgP (297 aa).

Residues 2–58 (FDYKLLSALAAVVEQAGFERAAQVLGLSQSAISQRIKLLEARVGQPVLVRGTPPSPT) form the HTH lysR-type domain. The H-T-H motif DNA-binding region spans 19-38 (FERAAQVLGLSQSAISQRIK).

The protein belongs to the LysR transcriptional regulatory family. Homodimer.

In terms of biological role, controls the transcription of genes involved in arginine and lysine metabolism. The sequence is that of HTH-type transcriptional regulator ArgP from Pseudomonas fluorescens (strain Pf0-1).